Consider the following 278-residue polypeptide: Large ribosomal subunit protein uL2 (278 aa).

The disordered stretch occupies residues 218–278 (RPHNRGVVMN…IMRSRHQRKK (61 aa)).

Belongs to the universal ribosomal protein uL2 family. In terms of assembly, part of the 50S ribosomal subunit. Forms a bridge to the 30S subunit in the 70S ribosome.

Functionally, one of the primary rRNA binding proteins. Required for association of the 30S and 50S subunits to form the 70S ribosome, for tRNA binding and peptide bond formation. It has been suggested to have peptidyltransferase activity; this is somewhat controversial. Makes several contacts with the 16S rRNA in the 70S ribosome. This is Large ribosomal subunit protein uL2 from Rhizobium etli (strain CIAT 652).